Reading from the N-terminus, the 25-residue chain is Snaclec bothroalternin subunit alpha/beta (25 aa).

In terms of domain architecture, C-type lectin spans 1-25 (DCPSDWSNHEGHCYRVFNEWMNWAD). Cys-2 and Cys-13 form a disulfide bridge.

This sequence belongs to the snaclec family. Heterodimer of subunits alpha and beta; disulfide-linked. In terms of tissue distribution, expressed by the venom gland.

It is found in the secreted. In terms of biological role, thrombin (F2) inhibitor that inhibits aggregation of rabbit platelets induced by alpha-thrombin. The chain is Snaclec bothroalternin subunit alpha/beta from Bothrops alternatus (Urutu).